A 79-amino-acid polypeptide reads, in one-letter code: Large ribosomal subunit protein bL31c (79 aa).

Belongs to the bacterial ribosomal protein bL31 family. Type A subfamily. Part of the 50S ribosomal subunit.

The protein resides in the plastid. The protein localises to the chloroplast. Binds the 23S rRNA. The polypeptide is Large ribosomal subunit protein bL31c (Gracilaria tenuistipitata var. liui (Red alga)).